A 122-amino-acid polypeptide reads, in one-letter code: Ribosomal silencing factor RsfS (122 aa).

Belongs to the Iojap/RsfS family. Interacts with ribosomal protein uL14 (rplN).

It localises to the cytoplasm. Functions as a ribosomal silencing factor. Interacts with ribosomal protein uL14 (rplN), blocking formation of intersubunit bridge B8. Prevents association of the 30S and 50S ribosomal subunits and the formation of functional ribosomes, thus repressing translation. The sequence is that of Ribosomal silencing factor RsfS from Chromobacterium violaceum (strain ATCC 12472 / DSM 30191 / JCM 1249 / CCUG 213 / NBRC 12614 / NCIMB 9131 / NCTC 9757 / MK).